Reading from the N-terminus, the 183-residue chain is Oleosin Bn-V (183 aa).

A polar region spans residues 1-47; the sequence is PARTHHDITTRDQYPLISRDRDQYGMIGRDQYNMSGQNYSKSRQIAK. Repeats lie at residues 11-20 and 21-30; these read RDQYPLISRD and RDQYGMIGRD. Positions 48-119 are hydrophobic; it reads ATTAVTAGDS…AAITVFSWIY (72 aa). Transmembrane regions (helical) follow at residues 57–77 and 99–119; these read SLLV…IVAT and TGFL…SWIY. The segment at 154 to 183 is disordered; the sequence is YGQQHTGEEHDRDRDHRTDRDRTRGTQHTT. Residues 159–177 show a composition bias toward basic and acidic residues; the sequence is TGEEHDRDRDHRTDRDRTR.

The protein belongs to the oleosin family.

It localises to the lipid droplet. Its subcellular location is the membrane. In terms of biological role, may have a structural role to stabilize the lipid body during desiccation of the seed by preventing coalescence of the oil. Probably interacts with both lipid and phospholipid moieties of lipid bodies. May also provide recognition signals for specific lipase anchorage in lipolysis during seedling growth. The protein is Oleosin Bn-V of Brassica napus (Rape).